The chain runs to 314 residues: Mitochondrial thiamine pyrophosphate carrier 1 (314 aa).

The next 6 membrane-spanning stretches (helical) occupy residues 14–30, 84–100, 116–136, 170–186, 217–233, and 285–302; these read VAAW…GLLA, LLYV…YSLF, LVVG…FDVL, GSIA…SIMF, SAGT…TFPL, and GILV…VSFW. Solcar repeat units lie at residues 14–103, 110–195, and 210–310; these read VAAW…FNRY, EARL…IRIY, and ELAT…AIHY.

Belongs to the mitochondrial carrier (TC 2.A.29) family.

The protein resides in the mitochondrion inner membrane. Functionally, mitochondrial transporter that mediates uptake of thiamine pyrophosphate (ThPP) into mitochondria. In Saccharomyces cerevisiae (strain ATCC 204508 / S288c) (Baker's yeast), this protein is Mitochondrial thiamine pyrophosphate carrier 1 (TPC1).